We begin with the raw amino-acid sequence, 204 residues long: Methylthioribulose-1-phosphate dehydratase (204 aa).

Residues H94 and H96 each contribute to the Zn(2+) site.

This sequence belongs to the aldolase class II family. MtnB subfamily. Requires Zn(2+) as cofactor.

It catalyses the reaction 5-(methylsulfanyl)-D-ribulose 1-phosphate = 5-methylsulfanyl-2,3-dioxopentyl phosphate + H2O. Its pathway is amino-acid biosynthesis; L-methionine biosynthesis via salvage pathway; L-methionine from S-methyl-5-thio-alpha-D-ribose 1-phosphate: step 2/6. Functionally, catalyzes the dehydration of methylthioribulose-1-phosphate (MTRu-1-P) into 2,3-diketo-5-methylthiopentyl-1-phosphate (DK-MTP-1-P). The chain is Methylthioribulose-1-phosphate dehydratase from Citrobacter koseri (strain ATCC BAA-895 / CDC 4225-83 / SGSC4696).